Reading from the N-terminus, the 121-residue chain is Large ribosomal subunit protein uL14 (121 aa).

This sequence belongs to the universal ribosomal protein uL14 family. As to quaternary structure, part of the 50S ribosomal subunit. Forms a cluster with proteins L3 and L19. In the 70S ribosome, L14 and L19 interact and together make contacts with the 16S rRNA in bridges B5 and B8.

Its function is as follows. Binds to 23S rRNA. Forms part of two intersubunit bridges in the 70S ribosome. The polypeptide is Large ribosomal subunit protein uL14 (Prochlorococcus marinus (strain MIT 9301)).